The following is a 419-amino-acid chain: Elongation factor Tu, chloroplastic (419 aa).

A tr-type G domain is found at 10-214; sequence KPHVNIGTIG…KVDEYIPTPD (205 aa). The segment at 19 to 26 is G1; the sequence is GHVDHGKT. Residue 19–26 coordinates GTP; it reads GHVDHGKT. A Mg(2+)-binding site is contributed by threonine 26. Residues 60–64 are G2; sequence GITIN. Residues 81–84 are G3; sequence DCPG. Residues 81-85 and 136-139 each bind GTP; these read DCPGH and NKED. The interval 136 to 139 is G4; sequence NKED. Residues 174–176 form a G5 region; that stretch reads SAL.

This sequence belongs to the TRAFAC class translation factor GTPase superfamily. Classic translation factor GTPase family. EF-Tu/EF-1A subfamily.

Its subcellular location is the plastid. The protein localises to the chloroplast. It carries out the reaction GTP + H2O = GDP + phosphate + H(+). Functionally, GTP hydrolase that promotes the GTP-dependent binding of aminoacyl-tRNA to the A-site of ribosomes during protein biosynthesis. This chain is Elongation factor Tu, chloroplastic (tufA), found in Tetradesmus obliquus (Green alga).